The primary structure comprises 221 residues: Ras-related protein Rab-27A (221 aa).

Serine 2 carries the post-translational modification N-acetylserine. Serine 2 carries the post-translational modification Phosphoserine. A GTP-binding site is contributed by 16 to 24; the sequence is GDSGVGKTS. The Effector region signature appears at 38 to 46; it reads FITTVGIDF. GTP-binding positions include 74–78, 133–136, and 163–165; these read DTAGQ, NKSD, and SAA. Cysteine 123 and cysteine 188 are oxidised to a cystine. S-geranylgeranyl cysteine attachment occurs at residues cysteine 219 and cysteine 221. Cysteine 221 carries the post-translational modification Cysteine methyl ester.

This sequence belongs to the small GTPase superfamily. Rab family. As to quaternary structure, binds SYTL1, SYTL2, SLAC2B, MYRIP, SYTL3, SYTL4, SYTL5 and MLPH. Interacts with UNC13D. Interacts with RPH3A and RPH3A. Does not interact with the BLOC-3 complex (heterodimer of HPS1 and HPS4). Interacts (GDP-bound form preferentially) with DENND10. As to expression, detected in melanocytes. Expressed abundantly in the stomach and is predominantly localized at the apical region of gastric-surface mucus cells. Also expressed in the thymus and lung.

It localises to the membrane. The protein localises to the melanosome. The protein resides in the late endosome. It is found in the lysosome. The catalysed reaction is GTP + H2O = GDP + phosphate + H(+). Regulated by guanine nucleotide exchange factors (GEFs) which promote the exchange of bound GDP for free GTP, GTPase activating proteins (GAPs) which increase the GTP hydrolysis activity, and GDP dissociation inhibitors which inhibit the dissociation of the nucleotide from the GTPase. Activated by GEFs such as DENND10. In terms of biological role, small GTPase which cycles between active GTP-bound and inactive GDP-bound states. In its active state, binds to a variety of effector proteins to regulate homeostasis of late endocytic pathway, including endosomal positioning, maturation and secretion. Plays a role in cytotoxic granule exocytosis in lymphocytes. Required for both granule maturation and granule docking and priming at the immunologic synapse. This chain is Ras-related protein Rab-27A (Rab27a), found in Mus musculus (Mouse).